We begin with the raw amino-acid sequence, 702 residues long: Protein crooked neck (702 aa).

13 HAT repeats span residues 56–88 (DYQQ…WEEQ), 90–122 (QEIQ…MEMK), 124–156 (KQVN…MEEM), 158–189 (ENVA…FELR), 191–222 (KEID…FEES), 224–259 (GFIH…FEEG), 261–295 (KEHD…HEKK), 305–337 (VIVS…LIEA), 339–373 (GDRD…LWIN), 383–419 (EDAE…FEIR), 454–486 (REFE…LENL), 488–522 (GDTD…FEVA), and 524–555 (GETE…FEMG). A Nuclear localization signal motif is present at residues 620–628 (PRRIKKRQK). The tract at residues 670–702 (KDNTVDDPPATAIASEPEPAADAAPADTTDSGD) is disordered. Over residues 683-702 (ASEPEPAADAAPADTTDSGD) the composition is skewed to low complexity.

This sequence belongs to the crooked-neck family. As to quaternary structure, colocalizes with a complex containing snRNP proteins. As to expression, transcribed in all cells during embryonic development.

It is found in the nucleus speckle. Its function is as follows. May be involved in pre-mRNA splicing process. Involved in embryonic neurogenesis and cell rearrangement during Malpighian tubule morphogenesis. The chain is Protein crooked neck (crn) from Drosophila melanogaster (Fruit fly).